The following is a 419-amino-acid chain: Enolase (419 aa).

Position 161 (Gln161) interacts with (2R)-2-phosphoglycerate. Glu205 (proton donor) is an active-site residue. 3 residues coordinate Mg(2+): Asp240, Glu283, and Asp309. Residues Lys334, Arg363, Ser364, and Lys385 each contribute to the (2R)-2-phosphoglycerate site. Lys334 functions as the Proton acceptor in the catalytic mechanism.

The protein belongs to the enolase family. The cofactor is Mg(2+).

It localises to the cytoplasm. It is found in the secreted. Its subcellular location is the cell surface. It catalyses the reaction (2R)-2-phosphoglycerate = phosphoenolpyruvate + H2O. Its pathway is carbohydrate degradation; glycolysis; pyruvate from D-glyceraldehyde 3-phosphate: step 4/5. Functionally, catalyzes the reversible conversion of 2-phosphoglycerate (2-PG) into phosphoenolpyruvate (PEP). It is essential for the degradation of carbohydrates via glycolysis. In Saccharolobus islandicus (strain Y.N.15.51 / Yellowstone #2) (Sulfolobus islandicus), this protein is Enolase.